Consider the following 915-residue polypeptide: Protein SLFN14 (915 aa).

The segment covering 157-167 (AAQRGRRRLHP) has biased composition (basic residues). The disordered stretch occupies residues 157 to 176 (AAQRGRRRLHPPRASNSNLQ). The interval 204 to 389 (ESTHVEFKRF…KVLEFKGALQ (186 aa)) is required for endoribonuclease activity. The tract at residues 390–569 (RHLFPVTQKT…QLGCEFFNLL (180 aa)) is required for ribosome binding.

Associates with ribosomes in an ATP-independent manner. Mg(2+) is required as a cofactor. Requires Mn(2+) as cofactor. As to expression, detected in reticulocytes (at protein level).

It is found in the nucleus. Its function is as follows. Shows no ribosome-associated and endoribonuclease activities. In terms of biological role, displays polysome-associated endoribonuclease activity towards mRNAs and rRNAs. May play a role in RNA surveillance pathways by recognizing stalled ribosomes and triggering endonucleolytic cleavage of aberrant mRNAs. Cleaves RNAs in a magnesium-, manganese-dependent and ATP-independent manner. Involved in correct maturation of megakaryocytes and especially important for proplatelet extension. This Oryctolagus cuniculus (Rabbit) protein is Protein SLFN14.